Consider the following 425-residue polypeptide: Tyrosine--tRNA ligase (425 aa).

An L-tyrosine-binding site is contributed by Tyr-34. The 'HIGH' region signature appears at 39 to 48 (PTADSLHVGN). L-tyrosine is bound by residues Tyr-171 and Gln-175. The short motif at 231 to 235 (KYGKS) is the 'KMSKS' region element. ATP is bound at residue Lys-234. The 67-residue stretch at 358 to 424 (APLVELLVHA…GKRTYTVVKI (67 aa)) folds into the S4 RNA-binding domain.

Belongs to the class-I aminoacyl-tRNA synthetase family. TyrS type 1 subfamily. In terms of assembly, homodimer.

The protein localises to the cytoplasm. The catalysed reaction is tRNA(Tyr) + L-tyrosine + ATP = L-tyrosyl-tRNA(Tyr) + AMP + diphosphate + H(+). In terms of biological role, catalyzes the attachment of tyrosine to tRNA(Tyr) in a two-step reaction: tyrosine is first activated by ATP to form Tyr-AMP and then transferred to the acceptor end of tRNA(Tyr). This chain is Tyrosine--tRNA ligase, found in Opitutus terrae (strain DSM 11246 / JCM 15787 / PB90-1).